The primary structure comprises 144 residues: Transcriptional regulator SlyA (144 aa).

The HTH marR-type domain occupies 2 to 135 (ESPLGSDLAR…LSNMIAKLEK (134 aa)). The H-T-H motif DNA-binding region spans 49-72 (QIQLAKAIGIEQPSLVRTLDQLEE).

Belongs to the SlyA family. As to quaternary structure, homodimer.

Functionally, transcription regulator that can specifically activate or repress expression of target genes. The protein is Transcriptional regulator SlyA of Sodalis glossinidius (strain morsitans).